The primary structure comprises 239 residues: Probable transcriptional regulatory protein BC_0539 (239 aa).

It belongs to the TACO1 family. YeeN subfamily.

It localises to the cytoplasm. The protein is Probable transcriptional regulatory protein BC_0539 of Bacillus cereus (strain ATCC 14579 / DSM 31 / CCUG 7414 / JCM 2152 / NBRC 15305 / NCIMB 9373 / NCTC 2599 / NRRL B-3711).